The primary structure comprises 329 residues: Beta-ketoacyl-[acyl-carrier-protein] synthase III (329 aa).

Catalysis depends on residues Cys-123 and His-256. Residues 257–261 (QANIR) form an ACP-binding region. Asn-286 is a catalytic residue.

Belongs to the thiolase-like superfamily. FabH family. In terms of assembly, homodimer.

It is found in the cytoplasm. It carries out the reaction malonyl-[ACP] + acetyl-CoA + H(+) = 3-oxobutanoyl-[ACP] + CO2 + CoA. It functions in the pathway lipid metabolism; fatty acid biosynthesis. Its function is as follows. Catalyzes the condensation reaction of fatty acid synthesis by the addition to an acyl acceptor of two carbons from malonyl-ACP. Catalyzes the first condensation reaction which initiates fatty acid synthesis and may therefore play a role in governing the total rate of fatty acid production. Possesses both acetoacetyl-ACP synthase and acetyl transacylase activities. Its substrate specificity determines the biosynthesis of branched-chain and/or straight-chain of fatty acids. The polypeptide is Beta-ketoacyl-[acyl-carrier-protein] synthase III (Burkholderia vietnamiensis (strain G4 / LMG 22486) (Burkholderia cepacia (strain R1808))).